The chain runs to 320 residues: TATA box-binding protein-like 2 (320 aa).

The protein belongs to the TBP family. As to expression, expression is restricted to the gonads, and is higher in the ovary than the testis.

Its subcellular location is the nucleus. Its function is as follows. TATA box-binding transcription factor. Members of the TBP family are differentially required to regulate transcription and development during early embryogenesis. Required for gastrulation. Regulates a large subset of genes that are ventrally expressed. Binds to a subset of promoters. This is TATA box-binding protein-like 2 from Xenopus laevis (African clawed frog).